The primary structure comprises 404 residues: Serine/threonine transporter SstT (404 aa).

A run of 9 helical transmembrane segments spans residues 17–37, 44–64, 75–95, 138–158, 179–199, 212–232, 287–307, 319–339, and 354–374; these read IGIG…VTAI, FVGA…VQAI, MTLI…VAVI, ALAT…GLAL, IVVW…FSTV, LLIL…NPLL, IPLG…VLTL, FLTA…ASGV, and FGIS…VGVI.

It belongs to the dicarboxylate/amino acid:cation symporter (DAACS) (TC 2.A.23) family.

The protein localises to the cell membrane. It carries out the reaction L-serine(in) + Na(+)(in) = L-serine(out) + Na(+)(out). It catalyses the reaction L-threonine(in) + Na(+)(in) = L-threonine(out) + Na(+)(out). Its function is as follows. Involved in the import of serine and threonine into the cell, with the concomitant import of sodium (symport system). This is Serine/threonine transporter SstT from Streptococcus equi subsp. zooepidemicus (strain H70).